We begin with the raw amino-acid sequence, 309 residues long: Porphobilinogen deaminase (309 aa).

The residue at position 241 (C241) is an S-(dipyrrolylmethanemethyl)cysteine.

Belongs to the HMBS family. As to quaternary structure, monomer. Dipyrromethane serves as cofactor.

The catalysed reaction is 4 porphobilinogen + H2O = hydroxymethylbilane + 4 NH4(+). It functions in the pathway porphyrin-containing compound metabolism; protoporphyrin-IX biosynthesis; coproporphyrinogen-III from 5-aminolevulinate: step 2/4. Its function is as follows. Tetrapolymerization of the monopyrrole PBG into the hydroxymethylbilane pre-uroporphyrinogen in several discrete steps. This is Porphobilinogen deaminase from Bacillus thuringiensis (strain Al Hakam).